We begin with the raw amino-acid sequence, 217 residues long: Uracil-DNA glycosylase (217 aa).

D62 serves as the catalytic Proton acceptor.

It belongs to the uracil-DNA glycosylase (UDG) superfamily. UNG family.

It is found in the cytoplasm. It catalyses the reaction Hydrolyzes single-stranded DNA or mismatched double-stranded DNA and polynucleotides, releasing free uracil.. Excises uracil residues from the DNA which can arise as a result of misincorporation of dUMP residues by DNA polymerase or due to deamination of cytosine. The protein is Uracil-DNA glycosylase of Streptococcus equi subsp. zooepidemicus (strain MGCS10565).